Here is a 297-residue protein sequence, read N- to C-terminus: Juvenile hormone acid O-methyltransferase (297 aa).

Belongs to the methyltransferase superfamily. As to expression, predominantly expressed in corpora allata. Also expressed at low level in testis.

The catalysed reaction is (2E,6E)-farnesoate + S-adenosyl-L-methionine = methyl (2E,6E)-farnesoate + S-adenosyl-L-homocysteine. It carries out the reaction juvenile hormone III carboxylate + S-adenosyl-L-methionine = juvenile hormone III + S-adenosyl-L-homocysteine. Its function is as follows. O-methyltransferase that transfers a methyl group from S-adenosyl-L-methionine (SAM) to the carboxyl group of juvenile hormone acids to produce active juvenile hormones in the corpora allata, the last step during juvenile hormone biosynthesis. Also able to methylate farnesoate to methyl farnesoate. This chain is Juvenile hormone acid O-methyltransferase, found in Drosophila melanogaster (Fruit fly).